The chain runs to 269 residues: Shikimate dehydrogenase (NADP(+)) (269 aa).

Shikimate contacts are provided by residues 17-19 (SKS) and threonine 64. Lysine 68 serves as the catalytic Proton acceptor. NADP(+) is bound at residue glutamate 80. Residues asparagine 89 and aspartate 105 each contribute to the shikimate site. Residues 130 to 134 (GAGGA), 154 to 159 (NRTHAK), and methionine 213 contribute to the NADP(+) site. Tyrosine 215 lines the shikimate pocket. Position 237 (glycine 237) interacts with NADP(+).

The protein belongs to the shikimate dehydrogenase family. As to quaternary structure, homodimer.

It carries out the reaction shikimate + NADP(+) = 3-dehydroshikimate + NADPH + H(+). It functions in the pathway metabolic intermediate biosynthesis; chorismate biosynthesis; chorismate from D-erythrose 4-phosphate and phosphoenolpyruvate: step 4/7. Functionally, involved in the biosynthesis of the chorismate, which leads to the biosynthesis of aromatic amino acids. Catalyzes the reversible NADPH linked reduction of 3-dehydroshikimate (DHSA) to yield shikimate (SA). In Neisseria cinerea, this protein is Shikimate dehydrogenase (NADP(+)).